The following is a 400-amino-acid chain: CCA-adding enzyme (400 aa).

Positions 28 and 31 each coordinate ATP. CTP is bound by residues glycine 28 and arginine 31. Mg(2+) contacts are provided by aspartate 41 and aspartate 43. ATP-binding residues include arginine 112, aspartate 155, arginine 158, arginine 161, and arginine 164. CTP is bound by residues arginine 112, aspartate 155, arginine 158, arginine 161, and arginine 164.

Belongs to the tRNA nucleotidyltransferase/poly(A) polymerase family. Bacterial CCA-adding enzyme type 3 subfamily. As to quaternary structure, homodimer. Mg(2+) is required as a cofactor.

The catalysed reaction is a tRNA precursor + 2 CTP + ATP = a tRNA with a 3' CCA end + 3 diphosphate. It catalyses the reaction a tRNA with a 3' CCA end + 2 CTP + ATP = a tRNA with a 3' CCACCA end + 3 diphosphate. Functionally, catalyzes the addition and repair of the essential 3'-terminal CCA sequence in tRNAs without using a nucleic acid template. Adds these three nucleotides in the order of C, C, and A to the tRNA nucleotide-73, using CTP and ATP as substrates and producing inorganic pyrophosphate. tRNA 3'-terminal CCA addition is required both for tRNA processing and repair. Also involved in tRNA surveillance by mediating tandem CCA addition to generate a CCACCA at the 3' terminus of unstable tRNAs. While stable tRNAs receive only 3'-terminal CCA, unstable tRNAs are marked with CCACCA and rapidly degraded. This chain is CCA-adding enzyme, found in Staphylococcus aureus (strain COL).